The following is a 419-amino-acid chain: tRNA(Met) cytidine acetate ligase (419 aa).

ATP contacts are provided by residues 7–20 (ITEY…HLHH), glycine 101, asparagine 163, and arginine 188.

It belongs to the TmcAL family.

It localises to the cytoplasm. The catalysed reaction is cytidine(34) in elongator tRNA(Met) + acetate + ATP = N(4)-acetylcytidine(34) in elongator tRNA(Met) + AMP + diphosphate. In terms of biological role, catalyzes the formation of N(4)-acetylcytidine (ac(4)C) at the wobble position of elongator tRNA(Met), using acetate and ATP as substrates. First activates an acetate ion to form acetyladenylate (Ac-AMP) and then transfers the acetyl group to tRNA to form ac(4)C34. The sequence is that of tRNA(Met) cytidine acetate ligase from Syntrophotalea carbinolica (strain DSM 2380 / NBRC 103641 / GraBd1) (Pelobacter carbinolicus).